Reading from the N-terminus, the 232-residue chain is Acetate--CoA ligase [ADP-forming] I subunit beta (232 aa).

The region spanning 27–63 (KEILKLYGIPVPEFKVARNEEEAVKFSGEIGYPVVMK) is the ATP-grasp domain. Residue 53-64 (SGEIGYPVVMKI) participates in ATP binding.

Belongs to the acetate CoA ligase beta subunit family. Heterotetramer of two alpha and two beta subunits.

The protein resides in the cytoplasm. It catalyses the reaction acetate + ATP + CoA = acetyl-CoA + ADP + phosphate. Activity is dependent on magnesium. Catalyzes the reversible formation of acetate and ATP from acetyl-CoA by using ADP and phosphate. Can use other substrates such as isobutyryl-CoA, propionyl-CoA and butyryl-CoA, but not indoleacetyl-CoA, phenylacetyl-CoA or succinyl-CoA. Seems to be involved primarily in the conversion of acetyl-CoA to acetate. Participates in the degradation of branched-chain amino acids via branched-chain-acyl-CoA esters. The polypeptide is Acetate--CoA ligase [ADP-forming] I subunit beta (Pyrococcus furiosus (strain ATCC 43587 / DSM 3638 / JCM 8422 / Vc1)).